The primary structure comprises 424 residues: CinA-like protein (424 aa).

This sequence belongs to the CinA family.

This Prochlorococcus marinus (strain MIT 9215) protein is CinA-like protein.